Reading from the N-terminus, the 253-residue chain is Tetraspanin-11 (253 aa).

3 helical membrane passes run 19–39 (LLFV…AVGI), 63–83 (ILIF…GAIL), and 93–113 (YFCL…LAHV). Asn127 carries N-linked (GlcNAc...) asparagine glycosylation. The chain crosses the membrane as a helical span at residues 220–240 (LLLMGAVGIGVACLQICGMVL).

It belongs to the tetraspanin (TM4SF) family.

It localises to the membrane. In Homo sapiens (Human), this protein is Tetraspanin-11 (TSPAN11).